Reading from the N-terminus, the 246-residue chain is Type III pantothenate kinase (246 aa).

ATP is bound at residue 11–18 (DIGNSFIK). Residues tyrosine 95 and 102 to 105 (GVDR) each bind substrate. Aspartate 104 functions as the Proton acceptor in the catalytic mechanism. Aspartate 125 is a K(+) binding site. Threonine 128 contributes to the ATP binding site. Threonine 179 lines the substrate pocket.

Belongs to the type III pantothenate kinase family. In terms of assembly, homodimer. It depends on NH4(+) as a cofactor. The cofactor is K(+).

Its subcellular location is the cytoplasm. The catalysed reaction is (R)-pantothenate + ATP = (R)-4'-phosphopantothenate + ADP + H(+). The protein operates within cofactor biosynthesis; coenzyme A biosynthesis; CoA from (R)-pantothenate: step 1/5. In terms of biological role, catalyzes the phosphorylation of pantothenate (Pan), the first step in CoA biosynthesis. The chain is Type III pantothenate kinase from Pseudoalteromonas atlantica (strain T6c / ATCC BAA-1087).